The following is a 179-amino-acid chain: Translation initiation factor IF-3 (179 aa).

It belongs to the IF-3 family. In terms of assembly, monomer.

It is found in the cytoplasm. IF-3 binds to the 30S ribosomal subunit and shifts the equilibrium between 70S ribosomes and their 50S and 30S subunits in favor of the free subunits, thus enhancing the availability of 30S subunits on which protein synthesis initiation begins. In Treponema pallidum (strain Nichols), this protein is Translation initiation factor IF-3.